A 181-amino-acid chain; its full sequence is MATEPEAAEPVVPSLVDRYFTRWYKPDVKGKFCEDHCILQHSNRICVITLAESHPVLQSGKTIKSISYQISTNCSRLQNKVSGKFKRGAQFLTELAPLCKIYCSDGEEYTVSSCVRGRLMEVNENILHKPSILQEKPSTEGYIAVVLPKFEESKSITEGLLTQKQYEEVMVKRINATTATS.

This sequence belongs to the ABITRAM family. As to quaternary structure, interacts with F-actin. Interacts with G-actin.

It localises to the nucleus speckle. It is found in the cell projection. Its subcellular location is the lamellipodium. The protein resides in the nucleus. The protein localises to the growth cone. It localises to the dendrite. Actin-binding protein that regulates actin polymerization, filopodia dynamics and increases the branching of proximal dendrites of developing neurons. The polypeptide is Protein Abitram (Homo sapiens (Human)).